We begin with the raw amino-acid sequence, 318 residues long: MELLSPPLRDTDLLGPDGSLCSFATRDDFYDDPCFDSPDLRFFEDLDPRLVHVGALLKPEEHAHFPTTVHPGPGAREDEHVRAPSGHHQAGRCLLWACKACKRKTTNADRRKAATMRERRRLSKVNEAFETLKRCTSSNPNQRLPKVEILRNAIRYIEGLQALLRDQDAAPPGAAAFYAPGPLPPGRGSEHYSGDSDASSPRSNCSDGMMDYSGPPSGPRRQNGYDAAYYSEASSEPRPGKSAAVSSLDCLSSIVERISTDSPAAPSLLLPDAPPESPPGPPEETSSSDAEQGTQTPSPDSTPQCPAGSKPNPIYQVL.

Residue Met1 forms a Peptide (Met-Gly) (interchain with G-Cter in ubiquitin) linkage. Residue Lys104 is modified to N6-methyllysine; by EHMT2. Residues 109–160 form the bHLH domain; sequence DRRKAATMRERRRLSKVNEAFETLKRCTSSNPNQRLPKVEILRNAIRYIEGL. Disordered regions lie at residues 175–224 and 262–318; these read AAFY…RQNG and SPAA…YQVL. Positions 196–206 are enriched in polar residues; it reads SDASSPRSNCS. Positions 262–271 are enriched in low complexity; the sequence is SPAAPSLLLP. Pro residues predominate over residues 272 to 282; sequence DAPPESPPGPP. Positions 290–304 are enriched in polar residues; the sequence is AEQGTQTPSPDSTPQ.

As to quaternary structure, efficient DNA binding requires dimerization with another bHLH protein. Seems to form active heterodimers with ITF-2. Interacts with SUV39H1. Interacts with DDX5. Interacts with CHD2. Interacts with TSC22D3. Interacts with SETD3. Interacts with P-TEFB complex; promotes the transcriptional activity of MYOD1 through its CDK9-mediated phosphorylation. Interacts with CSRP3. Interacts with NUPR1. Post-translationally, phosphorylated by CDK9. This phosphorylation promotes its function in muscle differentiation. In terms of processing, acetylated by a complex containing EP300 and PCAF. The acetylation is essential to activate target genes. Conversely, its deacetylation by SIRT1 inhibits its function. Ubiquitinated on the N-terminus; which is required for proteasomal degradation. Post-translationally, methylation at Lys-104 by EHMT2/G9a inhibits myogenic activity.

The protein localises to the nucleus. Its function is as follows. Acts as a transcriptional activator that promotes transcription of muscle-specific target genes and plays a role in muscle differentiation. Together with MYF5 and MYOG, co-occupies muscle-specific gene promoter core region during myogenesis. Induces fibroblasts to differentiate into myoblasts. Interacts with and is inhibited by the twist protein. This interaction probably involves the basic domains of both proteins. The protein is Myoblast determination protein 1 (Myod1) of Rattus norvegicus (Rat).